Consider the following 158-residue polypeptide: Encapsulin nanocompartment cargo protein EncB (158 aa).

Fe cation is bound by residues Glu-22, Glu-52, and His-55. Short sequence motifs (di-iron-binding motif) lie at residues 52–55 (EKEH) and 58–61 (EAVH). The disordered stretch occupies residues 92–158 (ATVHVPTPDG…RGGGGSGSGR (67 aa)). The tract at residues 142 to 149 (LTVGSLRR) is probable targeting peptide. A compositionally biased stretch (gly residues) spans 148 to 158 (RRGGGGSGSGR).

It belongs to the ferritin-like superfamily.

Its subcellular location is the encapsulin nanocompartment. In terms of biological role, cargo protein of a type 1 encapsulin nanocompartment. May help nucleate Fe atoms in the interior of the encapsulin nanocompartment. Present in about 36 copies/encapsulin nanocompartment. This is Encapsulin nanocompartment cargo protein EncB from Myxococcus xanthus (strain DK1622).